Here is a 215-residue protein sequence, read N- to C-terminus: Probable phosphoglycerate mutase GpmB (215 aa).

Substrate contacts are provided by residues 8-15 (RHGETQWN), 21-22 (QG), Arg58, Arg60, 82-85 (ELDM), 104-105 (RR), and 151-152 (GI). The active-site Tele-phosphohistidine intermediate is the His9. Glu82 serves as the catalytic Proton donor/acceptor.

The protein belongs to the phosphoglycerate mutase family. GpmB subfamily.

It carries out the reaction (2R)-2-phosphoglycerate = (2R)-3-phosphoglycerate. It participates in carbohydrate degradation; glycolysis; pyruvate from D-glyceraldehyde 3-phosphate: step 3/5. This is Probable phosphoglycerate mutase GpmB from Klebsiella pneumoniae (strain 342).